A 160-amino-acid polypeptide reads, in one-letter code: Leucokinin (160 aa).

Residues 1–19 (MAKIVLCMVLLAFGRQVYG) form the signal peptide. The propeptide occupies 20 to 130 (ASLVPAPISE…RIKSQLQRDE (111 aa)). Position 147 is a glycine amide (glycine 147). Positions 151–160 (SPEPPILPDY) are excised as a propeptide.

The protein localises to the secreted. Functionally, acts through intracellular calcium in Malpighian tubule stellate cells to raise chloride conductance. This is Leucokinin (Lk) from Drosophila melanogaster (Fruit fly).